Reading from the N-terminus, the 268-residue chain is Putative S-adenosyl-L-methionine-dependent methyltransferase MAP_0663 (268 aa).

Residues Asp124 and 153 to 154 (DL) each bind S-adenosyl-L-methionine.

The protein belongs to the UPF0677 family.

Exhibits S-adenosyl-L-methionine-dependent methyltransferase activity. This chain is Putative S-adenosyl-L-methionine-dependent methyltransferase MAP_0663, found in Mycolicibacterium paratuberculosis (strain ATCC BAA-968 / K-10) (Mycobacterium paratuberculosis).